Reading from the N-terminus, the 798-residue chain is Metabotropic glutamate receptor-like protein A (798 aa).

Positions 1–23 (MNKLKFLIILFITFLFNLKYINS) are cleaved as a signal peptide. Residues 24–388 (LKQCKISVLL…DYSNSMKLGL (365 aa)) lie on the Extracellular side of the membrane. Asn186, Asn275, and Asn320 each carry an N-linked (GlcNAc...) asparagine glycan. The chain crosses the membrane as a helical span at residues 389-409 (TIVSGFCILFCIISMVLVIMF). Residues 410 to 419 (RHAKIIKSAS) are Cytoplasmic-facing. Residues 420 to 440 (PIFCLLILFGCIIIFSGCIIF) form a helical membrane-spanning segment. The Extracellular portion of the chain corresponds to 441–447 (SLSPTDG). Residues 448–468 (ICGARVWLLSIGYTIFLGSLL) form a helical membrane-spanning segment. At 469–494 (VKNWRIWLLFDNPKLKKRSITNWKLY) the chain is on the cytoplasmic side. Residues 495–515 (PFVAGILAADVLILALWQGLG) traverse the membrane as a helical segment. Residues 516–545 (DIRSESRIGIDSLTKYQYANVCSSNDQGSV) are Extracellular-facing. Residues 546 to 566 (ALYILLVFHGIKLLAACFISF) traverse the membrane as a helical segment. Residues 567–580 (KIKAVDIEEFNESK) lie on the Cytoplasmic side of the membrane. The helical transmembrane segment at 581–601 (PIASSIYIITFCLFIVIPLMV) threads the bilayer. Residues 602 to 609 (SPQSVASQ) lie on the Extracellular side of the membrane. A helical membrane pass occupies residues 610 to 630 (VITIVVCAIVTTLISISLLFG). The Cytoplasmic portion of the chain corresponds to 631 to 798 (SKFYMMATQG…NQSEIDPDDV (168 aa)). A coiled-coil region spans residues 714 to 771 (AEQDSKLDLENQNDENEIENNQNNQNNIVEDCQKVEKLEKDENLEKDENLEKDENLEK). The segment covering 752–774 (EKDENLEKDENLEKDENLEKDNE) has biased composition (basic and acidic residues). The disordered stretch occupies residues 752–798 (EKDENLEKDENLEKDENLEKDNENQSIIQKKRLSKNFNQSEIDPDDV).

The protein in the N-terminal section; belongs to the BMP lipoprotein family. It in the C-terminal section; belongs to the G-protein coupled receptor 3 family. GABA-B receptor subfamily.

The protein localises to the membrane. It localises to the cytoplasm. The protein resides in the cell cortex. Its subcellular location is the perinuclear region. May play an important role in the terminal differentiation. The chain is Metabotropic glutamate receptor-like protein A (grlA) from Dictyostelium discoideum (Social amoeba).